Here is a 602-residue protein sequence, read N- to C-terminus: Glutamine--fructose-6-phosphate aminotransferase [isomerizing] (602 aa).

Cys2 functions as the Nucleophile; for GATase activity in the catalytic mechanism. In terms of domain architecture, Glutamine amidotransferase type-2 spans 2-219 (CGIIGYIGDR…DGEYAILTKD (218 aa)). 2 consecutive SIS domains span residues 280–420 (VAEE…VLGT) and 453–592 (LAET…PDKP). Residue Lys597 is the For Fru-6P isomerization activity of the active site.

Homodimer.

Its subcellular location is the cytoplasm. It carries out the reaction D-fructose 6-phosphate + L-glutamine = D-glucosamine 6-phosphate + L-glutamate. Functionally, catalyzes the first step in hexosamine metabolism, converting fructose-6P into glucosamine-6P using glutamine as a nitrogen source. The protein is Glutamine--fructose-6-phosphate aminotransferase [isomerizing] of Thermococcus kodakarensis (strain ATCC BAA-918 / JCM 12380 / KOD1) (Pyrococcus kodakaraensis (strain KOD1)).